A 358-amino-acid polypeptide reads, in one-letter code: PDZ and LIM domain protein 3 (358 aa).

Residues 1–84 (MPQNVLLPGP…QLCLKIDRAE (84 aa)) form the PDZ domain. Disordered stretches follow at residues 126–155 (FILPGRSSGSSTPSGFDPGSGRSTPSSVST) and 237–274 (DTEHPSKPRQSGSFKILQDMVDDDPDRPSGTRSVRAPV). Residues 129–146 (PGRSSGSSTPSGFDPGSG) are compositionally biased toward low complexity. The LIM zinc-binding domain maps to 288 to 347 (PICDRCGNGIVGTVVKAKDKLRHPDCFVCSDCNLNLKQKGYFFVEGQLYCEAHARARMRP).

Its subcellular location is the cytoplasm. The protein resides in the myofibril. It is found in the sarcomere. It localises to the z line. Its function is as follows. May play a role in the organization of actin filament arrays within muscle cells. The sequence is that of PDZ and LIM domain protein 3 (pdlim3) from Xenopus laevis (African clawed frog).